The chain runs to 310 residues: Spermatid maturation protein 1 (310 aa).

The helical transmembrane segment at 29-49 (ILLLLGLIVCINIGINLVTLL) threads the bilayer. The tract at residues 215 to 238 (ALSHKNNAAGSGGCVEGEQAQGQP) is disordered. The stretch at 262–286 (VYDARDVRRRLRELTQEVEALSHCY) forms a coiled coil.

As to expression, testis-specific. Exclusively present in cytoplasm of steps 14-16 elongated spermatids (at protein level).

It localises to the membrane. The protein resides in the cytoplasm. Functionally, required for proper cytoplasm removal during spermatogenesis. This is Spermatid maturation protein 1 (Spem1) from Mus musculus (Mouse).